The chain runs to 423 residues: 3-phosphoshikimate 1-carboxyvinyltransferase (423 aa).

3-phosphoshikimate-binding residues include K21, S22, and R26. Residue K21 coordinates phosphoenolpyruvate. Residues G93 and R123 each contribute to the phosphoenolpyruvate site. 6 residues coordinate 3-phosphoshikimate: S168, S169, Q170, S196, D311, and K338. A phosphoenolpyruvate-binding site is contributed by Q170. D311 serves as the catalytic Proton acceptor. Residues R342, R383, and K408 each contribute to the phosphoenolpyruvate site.

Belongs to the EPSP synthase family. Monomer.

It localises to the cytoplasm. The enzyme catalyses 3-phosphoshikimate + phosphoenolpyruvate = 5-O-(1-carboxyvinyl)-3-phosphoshikimate + phosphate. It functions in the pathway metabolic intermediate biosynthesis; chorismate biosynthesis. In terms of biological role, catalyzes the transfer of the enolpyruvyl moiety of phosphoenolpyruvate (PEP) to the 5-hydroxyl of shikimate-3-phosphate (S3P) to produce enolpyruvyl shikimate-3-phosphate and inorganic phosphate. The polypeptide is 3-phosphoshikimate 1-carboxyvinyltransferase (Methanosphaerula palustris (strain ATCC BAA-1556 / DSM 19958 / E1-9c)).